We begin with the raw amino-acid sequence, 225 residues long: Orotate phosphoribosyltransferase (225 aa).

5-phospho-alpha-D-ribose 1-diphosphate is bound at residue K31. 39–40 (FF) lines the orotate pocket. 5-phospho-alpha-D-ribose 1-diphosphate contacts are provided by residues 78–79 (YK), R105, K106, K109, H111, and 130–138 (DDVLTSGKA). T134 and R163 together coordinate orotate.

This sequence belongs to the purine/pyrimidine phosphoribosyltransferase family. PyrE subfamily. As to quaternary structure, homodimer.

It catalyses the reaction orotidine 5'-phosphate + diphosphate = orotate + 5-phospho-alpha-D-ribose 1-diphosphate. The protein operates within pyrimidine metabolism; UMP biosynthesis via de novo pathway; UMP from orotate: step 1/2. Its function is as follows. Catalyzes the transfer of a ribosyl phosphate group from 5-phosphoribose 1-diphosphate to orotate, leading to the formation of orotidine monophosphate (OMP). The chain is Orotate phosphoribosyltransferase (URA5) from Cryptococcus neoformans var. neoformans serotype D (strain B-3501A) (Filobasidiella neoformans).